Reading from the N-terminus, the 325-residue chain is ADP-L-glycero-D-manno-heptose-6-epimerase (325 aa).

NADP(+) is bound by residues 10–11 (FI), 31–32 (DD), Lys-38, and 75–79 (EGACS). Tyr-139 functions as the Proton acceptor in the catalytic mechanism. Position 143 (Lys-143) interacts with NADP(+). Asn-167 contacts substrate. Residues Val-168 and Lys-176 each contribute to the NADP(+) site. Catalysis depends on Lys-176, which acts as the Proton acceptor. Residues Ser-178, His-185, 199 to 202 (FEGS), Arg-212, and Tyr-285 each bind substrate.

The protein belongs to the NAD(P)-dependent epimerase/dehydratase family. HldD subfamily. As to quaternary structure, homopentamer. Requires NADP(+) as cofactor.

The enzyme catalyses ADP-D-glycero-beta-D-manno-heptose = ADP-L-glycero-beta-D-manno-heptose. It participates in nucleotide-sugar biosynthesis; ADP-L-glycero-beta-D-manno-heptose biosynthesis; ADP-L-glycero-beta-D-manno-heptose from D-glycero-beta-D-manno-heptose 7-phosphate: step 4/4. In terms of biological role, catalyzes the interconversion between ADP-D-glycero-beta-D-manno-heptose and ADP-L-glycero-beta-D-manno-heptose via an epimerization at carbon 6 of the heptose. The protein is ADP-L-glycero-D-manno-heptose-6-epimerase of Azoarcus sp. (strain BH72).